Reading from the N-terminus, the 393-residue chain is ATP phosphoribosyltransferase regulatory subunit (393 aa).

Belongs to the class-II aminoacyl-tRNA synthetase family. HisZ subfamily. Heteromultimer composed of HisG and HisZ subunits.

It is found in the cytoplasm. It participates in amino-acid biosynthesis; L-histidine biosynthesis; L-histidine from 5-phospho-alpha-D-ribose 1-diphosphate: step 1/9. In terms of biological role, required for the first step of histidine biosynthesis. May allow the feedback regulation of ATP phosphoribosyltransferase activity by histidine. The sequence is that of ATP phosphoribosyltransferase regulatory subunit from Synechococcus sp. (strain RCC307).